The primary structure comprises 79 residues: MSRLGIMVLTLLLLVYMATSHQDAGEKQATQRDAINFRWKRSLTRRTATEECEESCEEEEKTCCGEXDGEPVCARFCLG.

Positions 1–20 (MSRLGIMVLTLLLLVYMATS) are cleaved as a signal peptide. Residues 21-44 (HQDAGEKQATQRDAINFRWKRSLT) constitute a propeptide that is removed on maturation. Cystine bridges form between cysteine 52–cysteine 64, cysteine 56–cysteine 73, and cysteine 63–cysteine 77. Leucine 78 carries the leucine amide modification.

Belongs to the conotoxin O3 superfamily. In terms of tissue distribution, expressed by the venom duct.

Its subcellular location is the secreted. The sequence is that of Conotoxin ArMSGL-0124 from Conus arenatus (Sand-dusted cone).